The chain runs to 554 residues: GPI alpha-1,2-mannosyltransferase 3 (554 aa).

A glycan (N-linked (GlcNAc...) asparagine) is linked at Asn-26. The next 9 helical transmembrane spans lie at 63-83 (LLLF…TSFV), 136-156 (VQLL…VADV), 192-212 (LTNT…PLEG), 224-244 (LVAL…PLLF), 255-275 (DLIL…SLMI), 315-335 (GFPV…YLAP), 340-360 (ILLV…HKEF), 362-382 (FIYP…THLK), and 387-407 (PALS…GLVH). Asn-427 is a glycosylation site (N-linked (GlcNAc...) asparagine).

The protein belongs to the glycosyltransferase 22 family. PIGB subfamily.

The protein localises to the endoplasmic reticulum membrane. It functions in the pathway glycolipid biosynthesis; glycosylphosphatidylinositol-anchor biosynthesis. Alpha-1,2-mannosyltransferase that catalyzes the transfer of the third mannose, via an alpha-1,2 bond, from a dolichol-phosphate-mannose (Dol-P-Man) to an alpha-D-Man-(1-&gt;6)-2-PEtn-alpha-D-Man-(1-&gt;4)-alpha-D-GlcN-(1-&gt;6)-(1-radyl,2-acyl-sn-glycero-3-phospho)-2-acyl-inositol intermediate to generate an alpha-D-Man-(1-&gt;2)-alpha-D-Man-(1-&gt;6)-2-PEtn-alpha-D-Man-(1-&gt;4)-alpha-D-GlcN-(1-&gt;6)-(1-radyl,2-acyl-sn-glycero-3-phospho)-2-acyl-inositol (also termed H6) and participates in the nineth step of the glycosylphosphatidylinositol-anchor biosynthesis. May also add the third mannose to an alpha-D-Man-(1-&gt;6)-alpha-D-Man-(1-&gt;4)-alpha-D-GlcN-(1-&gt;6)-(1-radyl,2-acyl-sn-glycero-3-phospho)-2-acyl-inositol (also termed H3) intermediate generating an alpha-D-Man-(1-&gt;2)-alpha-D-Man-(1-&gt;6)-alpha-D-Man-(1-&gt;4)-alpha-D-GlcN-(1-&gt;6)-(1-radyl,2-acyl-sn-glycero-3-phospho)-2-acyl-inositol (also termed H4). This chain is GPI alpha-1,2-mannosyltransferase 3, found in Homo sapiens (Human).